We begin with the raw amino-acid sequence, 387 residues long: Probable aminomethyltransferase, mitochondrial (387 aa).

Substrate-binding residues include E219, R248, and Y385.

This sequence belongs to the GcvT family. In terms of assembly, the glycine cleavage system is composed of four proteins: P, T, L and H.

The protein resides in the mitochondrion. It catalyses the reaction N(6)-[(R)-S(8)-aminomethyldihydrolipoyl]-L-lysyl-[protein] + (6S)-5,6,7,8-tetrahydrofolate = N(6)-[(R)-dihydrolipoyl]-L-lysyl-[protein] + (6R)-5,10-methylene-5,6,7,8-tetrahydrofolate + NH4(+). The glycine cleavage system catalyzes the degradation of glycine. This chain is Probable aminomethyltransferase, mitochondrial (gcv1), found in Schizosaccharomyces pombe (strain 972 / ATCC 24843) (Fission yeast).